We begin with the raw amino-acid sequence, 391 residues long: GTPase Obg (391 aa).

Residues 1 to 159 (MQFVDEATID…RRLRLELKVL (159 aa)) enclose the Obg domain. Residues 160–333 (ADVGLLGMPN…LVYALMNAIE (174 aa)) enclose the OBG-type G domain. Residues 166–173 (GMPNAGKS), 191–195 (FTTLI), 213–216 (DIPG), 283–286 (NKID), and 314–316 (SAA) contribute to the GTP site. Residues Ser-173 and Thr-193 each contribute to the Mg(2+) site. Over residues 367 to 377 (LKAEARQARQN) the composition is skewed to basic and acidic residues. Residues 367–391 (LKAEARQARQNDDDDDHDVEVVYEP) are disordered. Residues 378–391 (DDDDDHDVEVVYEP) show a composition bias toward acidic residues.

Belongs to the TRAFAC class OBG-HflX-like GTPase superfamily. OBG GTPase family. As to quaternary structure, monomer. Requires Mg(2+) as cofactor.

It is found in the cytoplasm. In terms of biological role, an essential GTPase which binds GTP, GDP and possibly (p)ppGpp with moderate affinity, with high nucleotide exchange rates and a fairly low GTP hydrolysis rate. Plays a role in control of the cell cycle, stress response, ribosome biogenesis and in those bacteria that undergo differentiation, in morphogenesis control. In Alcanivorax borkumensis (strain ATCC 700651 / DSM 11573 / NCIMB 13689 / SK2), this protein is GTPase Obg.